The sequence spans 864 residues: Leucine--tRNA ligase (864 aa).

Residues 42–52 carry the 'HIGH' region motif; it reads PYPSGKLHMGH. The 'KMSKS' region motif lies at 624 to 628; the sequence is KMSKS. ATP is bound at residue Lys627.

This sequence belongs to the class-I aminoacyl-tRNA synthetase family.

The protein resides in the cytoplasm. The catalysed reaction is tRNA(Leu) + L-leucine + ATP = L-leucyl-tRNA(Leu) + AMP + diphosphate. The polypeptide is Leucine--tRNA ligase (Burkholderia thailandensis (strain ATCC 700388 / DSM 13276 / CCUG 48851 / CIP 106301 / E264)).